The primary structure comprises 729 residues: Disintegrin and metalloproteinase domain-containing protein 21 (729 aa).

Positions 1-39 are cleaved as a signal peptide; sequence MECFIMLGADARTLMRVTLLLLWLKALPSLIDLSQTGST. A propeptide spanning residues 40–209 is cleaved from the precursor; the sequence is QYLSSPEVVI…MKQNYGKLWP (170 aa). Asn169 carries N-linked (GlcNAc...) asparagine glycosylation. Positions 176–183 match the Cysteine switch motif; the sequence is MLCSLTEK. Cys178 provides a ligand contact to Zn(2+). Residues 210–685 lie on the Extracellular side of the membrane; it reads HMWFLELAVV…DSGPTSQKRR (476 aa). One can recognise a Peptidase M12B domain in the interval 212 to 402; sequence WFLELAVVVD…NQGTCLYNHP (191 aa). Asn231 is a glycosylation site (N-linked (GlcNAc...) asparagine). 3 disulfide bridges follow: Cys320–Cys397, Cys360–Cys382, and Cys362–Cys367. Residue His345 participates in Zn(2+) binding. Glu346 is an active-site residue. Zn(2+) contacts are provided by His349 and His355. N-linked (GlcNAc...) asparagine glycosylation is found at Asn381, Asn441, and Asn482. A Disintegrin domain is found at 410-496; the sequence is VKRCGNGMVE…QCPEDGYVQD (87 aa). Disulfide bonds link Cys468-Cys488, Cys638-Cys649, Cys643-Cys655, and Cys657-Cys666. The EGF-like domain occupies 638–667; the sequence is CLPETCNRKGVCNNKHHCHCDYGWSPPFCL. A helical membrane pass occupies residues 686–706; the sequence is VIITVLSITVPVLSILICLLI. Over 707-729 the chain is Cytoplasmic; that stretch reads AGLYRIYCKIPSGPKETKASSPG.

Requires Zn(2+) as cofactor. Has no obvious cleavage site for furin endopeptidase, suggesting that the proteolytic processing is regulated. As to expression, highly expressed in Leydig cells. Expressed also in cauda epididymidis, vas deferens, convoluted tubules, kidney and the parietal cells of stomach. Not detected on developing spermatocytes or mature sperm.

The protein resides in the membrane. May be involved in sperm maturation and/or fertilization. May also be involved in epithelia functions associated with establishing and maintaining gradients of ions or nutrients. The protein is Disintegrin and metalloproteinase domain-containing protein 21 (Adam21) of Mus musculus (Mouse).